Reading from the N-terminus, the 145-residue chain is Deoxyuridine 5'-triphosphate nucleotidohydrolase (145 aa).

Residues 62–64, asparagine 75, 79–81, and lysine 89 contribute to the substrate site; these read RSG and TVD.

It belongs to the dUTPase family. Requires Mg(2+) as cofactor.

The enzyme catalyses dUTP + H2O = dUMP + diphosphate + H(+). It participates in pyrimidine metabolism; dUMP biosynthesis; dUMP from dCTP (dUTP route): step 2/2. Its function is as follows. This enzyme is involved in nucleotide metabolism: it produces dUMP, the immediate precursor of thymidine nucleotides and it decreases the intracellular concentration of dUTP so that uracil cannot be incorporated into DNA. The sequence is that of Deoxyuridine 5'-triphosphate nucleotidohydrolase from Helicobacter pylori (strain Shi470).